Consider the following 157-residue polypeptide: Ribonuclease H (157 aa).

Positions 1-146 (MPDLFAYTDG…ADELARAGMA (146 aa)) constitute an RNase H type-1 domain. Residues aspartate 9, glutamate 52, aspartate 74, and aspartate 138 each contribute to the Mg(2+) site.

It belongs to the RNase H family. In terms of assembly, monomer. Mg(2+) serves as cofactor.

Its subcellular location is the cytoplasm. It carries out the reaction Endonucleolytic cleavage to 5'-phosphomonoester.. Its function is as follows. Endonuclease that specifically degrades the RNA of RNA-DNA hybrids. This is Ribonuclease H from Ruegeria sp. (strain TM1040) (Silicibacter sp.).